We begin with the raw amino-acid sequence, 330 residues long: tRNA U34 carboxymethyltransferase (330 aa).

Carboxy-S-adenosyl-L-methionine contacts are provided by residues K98, W112, K117, G137, 187–188, M203, Y207, and R322; that span reads ME. The interval 309–330 is disordered; sequence NPSKTIEGYPGPKRATLIAEKP.

The protein belongs to the class I-like SAM-binding methyltransferase superfamily. CmoB family. As to quaternary structure, homotetramer.

It catalyses the reaction carboxy-S-adenosyl-L-methionine + 5-hydroxyuridine(34) in tRNA = 5-carboxymethoxyuridine(34) in tRNA + S-adenosyl-L-homocysteine + H(+). Functionally, catalyzes carboxymethyl transfer from carboxy-S-adenosyl-L-methionine (Cx-SAM) to 5-hydroxyuridine (ho5U) to form 5-carboxymethoxyuridine (cmo5U) at position 34 in tRNAs. This is tRNA U34 carboxymethyltransferase from Marinobacter nauticus (strain ATCC 700491 / DSM 11845 / VT8) (Marinobacter aquaeolei).